Here is a 189-residue protein sequence, read N- to C-terminus: Putative ankyrin repeat protein L38 (189 aa).

The stretch at tyrosine 108–lysine 137 is one ANK repeat.

The protein is Putative ankyrin repeat protein L38 of Acanthamoeba polyphaga mimivirus (APMV).